A 175-amino-acid polypeptide reads, in one-letter code: Large ribosomal subunit protein uL10 (175 aa).

Belongs to the universal ribosomal protein uL10 family. In terms of assembly, part of the ribosomal stalk of the 50S ribosomal subunit. The N-terminus interacts with L11 and the large rRNA to form the base of the stalk. The C-terminus forms an elongated spine to which L12 dimers bind in a sequential fashion forming a multimeric L10(L12)X complex.

Functionally, forms part of the ribosomal stalk, playing a central role in the interaction of the ribosome with GTP-bound translation factors. This Pelotomaculum thermopropionicum (strain DSM 13744 / JCM 10971 / SI) protein is Large ribosomal subunit protein uL10.